Consider the following 154-residue polypeptide: Superoxide dismutase [Cu-Zn] (154 aa).

Cu cation is bound by residues His47, His49, and His64. Cys58 and Cys147 are joined by a disulfide. Residues His64, His72, His81, and Asp84 each contribute to the Zn(2+) site. His121 serves as a coordination point for Cu cation. Substrate is bound at residue Arg144.

This sequence belongs to the Cu-Zn superoxide dismutase family. In terms of assembly, homodimer. It depends on Cu cation as a cofactor. Requires Zn(2+) as cofactor.

Its subcellular location is the cytoplasm. It catalyses the reaction 2 superoxide + 2 H(+) = H2O2 + O2. In terms of biological role, destroys radicals which are normally produced within the cells and which are toxic to biological systems. This chain is Superoxide dismutase [Cu-Zn] (SOD1), found in Eremothecium gossypii (strain ATCC 10895 / CBS 109.51 / FGSC 9923 / NRRL Y-1056) (Yeast).